We begin with the raw amino-acid sequence, 115 residues long: NADH-ubiquinone oxidoreductase chain 3 (115 aa).

Helical transmembrane passes span 4 to 24, 55 to 75, and 87 to 107; these read LITM…AFWL, FFLV…LLPL, and TMMV…YEWL.

Belongs to the complex I subunit 3 family. As to quaternary structure, core subunit of respiratory chain NADH dehydrogenase (Complex I) which is composed of 45 different subunits. Interacts with TMEM186. Interacts with TMEM242.

The protein localises to the mitochondrion inner membrane. The catalysed reaction is a ubiquinone + NADH + 5 H(+)(in) = a ubiquinol + NAD(+) + 4 H(+)(out). In terms of biological role, core subunit of the mitochondrial membrane respiratory chain NADH dehydrogenase (Complex I) which catalyzes electron transfer from NADH through the respiratory chain, using ubiquinone as an electron acceptor. Essential for the catalytic activity of complex I. This chain is NADH-ubiquinone oxidoreductase chain 3, found in Notiomys edwardsii (Edwards's long-clawed mouse).